A 359-amino-acid polypeptide reads, in one-letter code: Cytohesin-interacting protein (359 aa).

Positions 77–166 (LVTVEKQDNE…LLTIETLNGT (90 aa)) constitute a PDZ domain. Residues 166–188 (TMILKRTELEAKLQVLKQTLKQK) form an interaction with CYTH1 region. Residues 166 to 188 (TMILKRTELEAKLQVLKQTLKQK) adopt a coiled-coil conformation.

As to quaternary structure, interacts with CYTH1 and SNX27. In terms of tissue distribution, expressed in lymph nodes, thymus, spleen, lung, peripheral blood leukocytes and bone marrow.

It is found in the cytoplasm. The protein localises to the early endosome. In terms of biological role, by its binding to cytohesin-1 (CYTH1), it modifies activation of ARFs by CYTH1 and its precise function may be to sequester CYTH1 in the cytoplasm. In Homo sapiens (Human), this protein is Cytohesin-interacting protein (CYTIP).